The chain runs to 745 residues: 5-methyltetrahydropteroyltriglutamate--homocysteine methyltransferase (745 aa).

5-methyltetrahydropteroyltri-L-glutamate is bound by residues lysine 19 and asparagine 115. L-homocysteine-binding positions include isoleucine 420–serine 422 and glutamate 473. L-methionine-binding positions include isoleucine 420–serine 422 and glutamate 473. Residues aspartate 478, tyrosine 501, arginine 504–alanine 505, and tryptophan 550 each bind 5-methyltetrahydropteroyltri-L-glutamate. An L-homocysteine-binding site is contributed by aspartate 588. Aspartate 588 lines the L-methionine pocket. Residues histidine 630, cysteine 632, and glutamate 654 each coordinate Zn(2+). The Proton donor role is filled by histidine 683. Cysteine 715 contacts Zn(2+).

This sequence belongs to the vitamin-B12 independent methionine synthase family. The cofactor is Zn(2+).

It catalyses the reaction 5-methyltetrahydropteroyltri-L-glutamate + L-homocysteine = tetrahydropteroyltri-L-glutamate + L-methionine. Its pathway is amino-acid biosynthesis; L-methionine biosynthesis via de novo pathway; L-methionine from L-homocysteine (MetE route): step 1/1. In terms of biological role, catalyzes the transfer of a methyl group from 5-methyltetrahydrofolate to homocysteine resulting in methionine formation. This chain is 5-methyltetrahydropteroyltriglutamate--homocysteine methyltransferase, found in Streptococcus mutans serotype c (strain ATCC 700610 / UA159).